A 451-amino-acid polypeptide reads, in one-letter code: MSKLQHHSIGEVEPSIAIVGSGPAGCYTAQTLHKQWPSAQIVIFERLPVPYGLLRYGVSPDHQGTKAIARQFDRLFAEASVHFIGNVEVGKHISVEELQDAFDVVVLAAGLGADRPLPSLAGDAVYGAGQVMRWFNSHPDEQSFAPGFGATTTIIGNGNVAMDVVRLLAKHRDSFTGSDLDPQLIEKQPSRIHVVGRSPASAAKFDSMMIRELAEIDDAVFDVDVVDEPGHEDKRIHAKTKALLDLTAARAVPSPRVHVSFHFGWTPESLEPTGDGRTLRLVNTESRLAVKLIETDSVITAVGFGSGLRHEIDRVRFESAASDLDNGLLDTGLYCSGWFRRGPTGGIPANRLDAKMVCTRIIEDVASGAITPKKRGLEELATHLHPDTVDFTGWQRIDAVEASRTEHGRCRTKLPDIATMLDFARNRTHERTTDDTYRKQITDTVGHKEKR.

4 residues coordinate FAD: A24, E45, L53, and V89. Residues 157-160 (NGNV) and 197-198 (RS) each bind NADP(+). Residues W338 and 345–347 (GGI) contribute to the FAD site. An NADP(+)-binding site is contributed by G345.

It belongs to the ferredoxin--NADP reductase type 1 family. FAD serves as cofactor.

Functionally, involved in the degradation of cineol (eucalyptol). Catalyzes the reduction of cindoxin (CinC). In Citrobacter braakii, this protein is Cindoxin reductase (cinB).